The sequence spans 170 residues: Shikimate kinase (170 aa).

Position 15–20 (15–20 (GAGKTT)) interacts with ATP. Thr19 provides a ligand contact to Mg(2+). Substrate contacts are provided by Asp37, Arg61, and Gly83. Arg121 contributes to the ATP binding site. Arg140 is a substrate binding site.

The protein belongs to the shikimate kinase family. In terms of assembly, monomer. Mg(2+) serves as cofactor.

It is found in the cytoplasm. It carries out the reaction shikimate + ATP = 3-phosphoshikimate + ADP + H(+). The protein operates within metabolic intermediate biosynthesis; chorismate biosynthesis; chorismate from D-erythrose 4-phosphate and phosphoenolpyruvate: step 5/7. In terms of biological role, catalyzes the specific phosphorylation of the 3-hydroxyl group of shikimic acid using ATP as a cosubstrate. The sequence is that of Shikimate kinase from Neisseria gonorrhoeae (strain ATCC 700825 / FA 1090).